Consider the following 394-residue polypeptide: Deoxyguanosinetriphosphate triphosphohydrolase-like protein (394 aa).

The interval 1 to 36 (MSQAPYFVPRAPYAEDPSKSKGRRFKEDESRTRTPF) is disordered. Over residues 25 to 36 (FKEDESRTRTPF) the composition is skewed to basic and acidic residues. One can recognise an HD domain in the interval 70–210 (RLTHTLEVAQ…AALADDIAYN (141 aa)).

It belongs to the dGTPase family. Type 2 subfamily.

The chain is Deoxyguanosinetriphosphate triphosphohydrolase-like protein from Caulobacter vibrioides (strain ATCC 19089 / CIP 103742 / CB 15) (Caulobacter crescentus).